Here is a 238-residue protein sequence, read N- to C-terminus: Neuromodulin (238 aa).

A disordered region spans residues 1–238 (MLCCMRRTKQ…EEPEADQEHA (238 aa)). S-palmitoyl cysteine attachment occurs at residues cysteine 3 and cysteine 4. The segment covering 9 to 32 (KQVEKNDDDQKIEQDGIKPEDKAH) has biased composition (basic and acidic residues). The IQ domain maps to 31–60 (AHKAATKIQASFRGHITRKKLKGEKKDDVQ). A Phosphoserine; by PHK and PKC modification is found at serine 41. Residues 54–83 (EKKDDVQAAEAEANKKDEAPVADGVEKKGE) show a composition bias toward basic and acidic residues. Positions 84–95 (GTTTAEAAPATG) are enriched in low complexity. Residues 97 to 116 (KPDEPGKAGETPSEEKKGEG) show a composition bias toward basic and acidic residues. The segment covering 119 to 130 (ATEQAAPQAPAS) has biased composition (low complexity). The segment covering 139–154 (ETESATKASTDNSPSS) has biased composition (polar residues). Serine 151, serine 153, and serine 154 each carry phosphoserine. Over residues 155 to 167 (KAEDAPAKEEPKQ) the composition is skewed to basic and acidic residues. Low complexity predominate over residues 168–199 (ADVPAAVTAAAATTPAAEDAAAKATAQPPTET). Phosphothreonine is present on threonine 181. 2 positions are modified to phosphoserine; by CK2: serine 202 and serine 203. Over residues 213–225 (DETKPKESARQDE) the composition is skewed to basic and acidic residues. Acidic residues predominate over residues 226-238 (GKEEEPEADQEHA).

The protein belongs to the neuromodulin family. As to quaternary structure, identified in a complex containing FGFR4, NCAM1, CDH2, PLCG1, FRS2, SRC, SHC1, GAP43 and CTTN. Interacts (via IQ domain) with calmodulin. Binds calmodulin with a greater affinity in the absence of Ca(2+) than in its presence. In terms of processing, phosphorylated. Phosphorylation of this protein by a protein kinase C is specifically correlated with certain forms of synaptic plasticity. Palmitoylated by ZDHHC3. Palmitoylation is regulated by ARF6 and is essential for plasma membrane association and axonal and dendritic filopodia induction. Deacylated by LYPLA2.

The protein localises to the cell membrane. It is found in the cell projection. The protein resides in the growth cone membrane. It localises to the synapse. Its subcellular location is the filopodium membrane. The protein localises to the perikaryon. It is found in the dendrite. The protein resides in the axon. It localises to the cytoplasm. Functionally, this protein is associated with nerve growth. It is a major component of the motile 'growth cones' that form the tips of elongating axons. Plays a role in axonal and dendritic filopodia induction. The sequence is that of Neuromodulin (GAP43) from Homo sapiens (Human).